Consider the following 445-residue polypeptide: Phosphoglucosamine mutase (445 aa).

Residue Ser-102 is the Phosphoserine intermediate of the active site. Mg(2+) contacts are provided by Ser-102, Asp-241, Asp-243, and Asp-245. Ser-102 is subject to Phosphoserine.

Belongs to the phosphohexose mutase family. Mg(2+) serves as cofactor. Activated by phosphorylation.

It carries out the reaction alpha-D-glucosamine 1-phosphate = D-glucosamine 6-phosphate. Catalyzes the conversion of glucosamine-6-phosphate to glucosamine-1-phosphate. The protein is Phosphoglucosamine mutase of Pectobacterium atrosepticum (strain SCRI 1043 / ATCC BAA-672) (Erwinia carotovora subsp. atroseptica).